Here is a 188-residue protein sequence, read N- to C-terminus: Pyridoxal 5'-phosphate synthase subunit PdxT (188 aa).

Glycine 47–serine 49 lines the L-glutamine pocket. Cysteine 79 acts as the Nucleophile in catalysis. Residues arginine 105 and isoleucine 134–arginine 135 each bind L-glutamine. Catalysis depends on charge relay system residues histidine 170 and glutamate 172.

The protein belongs to the glutaminase PdxT/SNO family. In terms of assembly, in the presence of PdxS, forms a dodecamer of heterodimers. Only shows activity in the heterodimer.

It carries out the reaction aldehydo-D-ribose 5-phosphate + D-glyceraldehyde 3-phosphate + L-glutamine = pyridoxal 5'-phosphate + L-glutamate + phosphate + 3 H2O + H(+). The enzyme catalyses L-glutamine + H2O = L-glutamate + NH4(+). It functions in the pathway cofactor biosynthesis; pyridoxal 5'-phosphate biosynthesis. Its function is as follows. Catalyzes the hydrolysis of glutamine to glutamate and ammonia as part of the biosynthesis of pyridoxal 5'-phosphate. The resulting ammonia molecule is channeled to the active site of PdxS. The polypeptide is Pyridoxal 5'-phosphate synthase subunit PdxT (Listeria monocytogenes serotype 4b (strain CLIP80459)).